The sequence spans 423 residues: Protein disulfide isomerase-like 5-2 (423 aa).

Residues 1–35 (MAATTTRPLPLLLLLLLPPLLLLLLSFHAAAAAAA) form the signal peptide. One can recognise a Thioredoxin domain in the interval 36–149 (EEFPRDGRVI…LVRNLNKFVA (114 aa)). Residues Cys71 and Cys74 each act as nucleophile in the active site. Cysteines 71 and 74 form a disulfide. N-linked (GlcNAc...) asparagine glycosylation is present at Asn181. A helical transmembrane segment spans residues 386 to 406 (LVSLNSLYILICVFALLGVMI).

This sequence belongs to the protein disulfide isomerase family.

Its subcellular location is the membrane. In terms of biological role, acts as a protein-folding catalyst that interacts with nascent polypeptides to catalyze the formation, isomerization, and reduction or oxidation of disulfide bonds. May play a role in storage protein biogenesis. The protein is Protein disulfide isomerase-like 5-2 (PDIL5-2) of Oryza sativa subsp. japonica (Rice).